The following is a 260-amino-acid chain: 3'-5' ssDNA/RNA exonuclease TatD (260 aa).

Residues E91, H127, and H152 each coordinate a divalent metal cation.

This sequence belongs to the metallo-dependent hydrolases superfamily. TatD-type hydrolase family. TatD subfamily. As to quaternary structure, monomer. It depends on Mg(2+) as a cofactor.

It localises to the cytoplasm. In terms of biological role, 3'-5' exonuclease that prefers single-stranded DNA and RNA. May play a role in the H(2)O(2)-induced DNA damage repair. The chain is 3'-5' ssDNA/RNA exonuclease TatD from Citrobacter koseri (strain ATCC BAA-895 / CDC 4225-83 / SGSC4696).